The following is a 122-amino-acid chain: Large ribosomal subunit protein uL14c (122 aa).

It belongs to the universal ribosomal protein uL14 family. Part of the 50S ribosomal subunit.

It localises to the plastid. The protein resides in the chloroplast. Its function is as follows. Binds to 23S rRNA. The sequence is that of Large ribosomal subunit protein uL14c from Arabis hirsuta (Hairy rock-cress).